The chain runs to 465 residues: Cysteine--tRNA ligase (465 aa).

Zn(2+) is bound at residue cysteine 27. The short motif at 29-39 is the 'HIGH' region element; that stretch reads PTVYDEVHIGH. Cysteine 204, histidine 229, and glutamate 233 together coordinate Zn(2+). Positions 261–265 match the 'KMSKS' region motif; it reads KMSKS. Lysine 264 is an ATP binding site.

This sequence belongs to the class-I aminoacyl-tRNA synthetase family. Requires Zn(2+) as cofactor.

The protein localises to the cytoplasm. The enzyme catalyses tRNA(Cys) + L-cysteine + ATP = L-cysteinyl-tRNA(Cys) + AMP + diphosphate. The chain is Cysteine--tRNA ligase from Metallosphaera sedula (strain ATCC 51363 / DSM 5348 / JCM 9185 / NBRC 15509 / TH2).